The primary structure comprises 122 residues: MARIAGVDLPRNKRIEIALTYIYGIGRSLSQEILTAAGVDMNTRCDNLTEAEVTKIREYIDKNVKVEGDLRRDISMSIKRLMDLGCYRGLRHRKGLPCRGQRTKTNARTRKGPARTVAGKKK.

Residues 97–122 (PCRGQRTKTNARTRKGPARTVAGKKK) form a disordered region.

Belongs to the universal ribosomal protein uS13 family. Part of the 30S ribosomal subunit. Forms a loose heterodimer with protein S19. Forms two bridges to the 50S subunit in the 70S ribosome.

Located at the top of the head of the 30S subunit, it contacts several helices of the 16S rRNA. In the 70S ribosome it contacts the 23S rRNA (bridge B1a) and protein L5 of the 50S subunit (bridge B1b), connecting the 2 subunits; these bridges are implicated in subunit movement. Contacts the tRNAs in the A and P-sites. This chain is Small ribosomal subunit protein uS13, found in Geobacter sp. (strain M21).